The primary structure comprises 457 residues: Phosphatidate cytidylyltransferase (457 aa).

A run of 6 helical transmembrane segments spans residues 71 to 91, 154 to 174, 188 to 208, 214 to 234, 255 to 275, and 330 to 350; these read VMIS…IVLI, FIVT…FVLF, GSLC…HLII, GLFW…FAYL, GFLG…RILS, and FHAL…GFFA.

This sequence belongs to the CDS family. Homodimer. It depends on Mg(2+) as a cofactor.

The protein localises to the endoplasmic reticulum membrane. The protein resides in the cytoplasmic vesicle. Its subcellular location is the secretory vesicle. It carries out the reaction a 1,2-diacyl-sn-glycero-3-phosphate + CTP + H(+) = a CDP-1,2-diacyl-sn-glycerol + diphosphate. It participates in phospholipid metabolism; CDP-diacylglycerol biosynthesis; CDP-diacylglycerol from sn-glycerol 3-phosphate: step 3/3. Supplies CDP-diacylglycerol, which may play an important role as both a precursor to phosphoinositide biosynthesis in the plasma membrane and as a negative effector of phosphatidylinositol 4-kinase activity, thereby exerting an effect on cell proliferation via a lipid-dependent signal transduction cascade. This chain is Phosphatidate cytidylyltransferase (CDS1), found in Saccharomyces cerevisiae (strain ATCC 204508 / S288c) (Baker's yeast).